A 501-amino-acid chain; its full sequence is Aspartate--tRNA ligase, cytoplasmic (501 aa).

T52 is modified (phosphothreonine). K74 carries the N6-acetyllysine modification. E229 contributes to the L-aspartate binding site. S249 is subject to Phosphoserine. Positions 251–254 are aspartate; sequence QLYK. An L-aspartate-binding site is contributed by R273. Residues 273 to 275 and 281 to 283 contribute to the ATP site; these read RAE and RHL. At K374 the chain carries N6-acetyllysine. The tract at residues 411–415 is binding site for the 3'-end of tRNA; it reads KQSNS. Residue E424 coordinates ATP. L-aspartate is bound by residues S427 and R431. An ATP-binding site is contributed by 472–475; the sequence is GLER. A Phosphothreonine; by PKA modification is found at T500.

Belongs to the class-II aminoacyl-tRNA synthetase family. Type 2 subfamily. Homodimer. Part of a multisubunit complex that groups tRNA ligases for Arg (RARS1), Asp (DARS1), Gln (QARS1), Ile (IARS1), Leu (LARS1), Lys (KARS1), Met (MARS1) the bifunctional ligase for Glu and Pro (EPRS1) and the auxiliary subunits AIMP1/p43, AIMP2/p38 and EEF1E1/p18.

It is found in the cytoplasm. The enzyme catalyses tRNA(Asp) + L-aspartate + ATP = L-aspartyl-tRNA(Asp) + AMP + diphosphate. In terms of biological role, catalyzes the specific attachment of an amino acid to its cognate tRNA in a 2 step reaction: the amino acid (AA) is first activated by ATP to form AA-AMP and then transferred to the acceptor end of the tRNA. In Bos taurus (Bovine), this protein is Aspartate--tRNA ligase, cytoplasmic (DARS1).